A 266-amino-acid polypeptide reads, in one-letter code: Tryptophan synthase alpha chain (266 aa).

Active-site proton acceptor residues include glutamate 51 and aspartate 62.

It belongs to the TrpA family. As to quaternary structure, tetramer of two alpha and two beta chains.

It carries out the reaction (1S,2R)-1-C-(indol-3-yl)glycerol 3-phosphate + L-serine = D-glyceraldehyde 3-phosphate + L-tryptophan + H2O. The protein operates within amino-acid biosynthesis; L-tryptophan biosynthesis; L-tryptophan from chorismate: step 5/5. In terms of biological role, the alpha subunit is responsible for the aldol cleavage of indoleglycerol phosphate to indole and glyceraldehyde 3-phosphate. The polypeptide is Tryptophan synthase alpha chain (Thermosynechococcus vestitus (strain NIES-2133 / IAM M-273 / BP-1)).